The primary structure comprises 305 residues: tRNA-cytidine(32) 2-sulfurtransferase (305 aa).

The disordered stretch occupies residues 1 to 20; that stretch reads MTAVLPLPQPLADPAPRDPR. A PP-loop motif motif is present at residues 59-64; that stretch reads SGGKDS. [4Fe-4S] cluster contacts are provided by C134, C137, and C225. Residues 282 to 293 are compositionally biased toward low complexity; it reads DAPSDVDPDPSA. The segment at 282–305 is disordered; sequence DAPSDVDPDPSAWLSASHAPHDSD.

This sequence belongs to the TtcA family. As to quaternary structure, homodimer. Requires Mg(2+) as cofactor. It depends on [4Fe-4S] cluster as a cofactor.

The protein resides in the cytoplasm. It catalyses the reaction cytidine(32) in tRNA + S-sulfanyl-L-cysteinyl-[cysteine desulfurase] + AH2 + ATP = 2-thiocytidine(32) in tRNA + L-cysteinyl-[cysteine desulfurase] + A + AMP + diphosphate + H(+). Its pathway is tRNA modification. Functionally, catalyzes the ATP-dependent 2-thiolation of cytidine in position 32 of tRNA, to form 2-thiocytidine (s(2)C32). The sulfur atoms are provided by the cysteine/cysteine desulfurase (IscS) system. The chain is tRNA-cytidine(32) 2-sulfurtransferase from Xanthomonas euvesicatoria pv. vesicatoria (strain 85-10) (Xanthomonas campestris pv. vesicatoria).